Consider the following 597-residue polypeptide: Putative heat shock protein HSP 90-beta-3 (597 aa).

ATP is bound by residues Asn46, Asp88, and Lys107. The interval 201-241 (DKEISDDEAEEEKGEKEEEDKDDEEKPKIKDVGSDEEDDSK) is disordered. A compositionally biased stretch (acidic residues) spans 204 to 223 (ISDDEAEEEKGEKEEEDKDD). The segment covering 224–233 (EEKPKIKDVG) has biased composition (basic and acidic residues). Arg334 lines the ATP pocket. Positions 414-446 (LELPEDEEEKKKMEESKEKFENLCKLMKEILDK) form a coiled coil. The segment covering 564–578 (DEDEVAAEEPSDAVP) has biased composition (acidic residues). The segment at 564 to 597 (DEDEVAAEEPSDAVPDEIPPLEGDEDASRMEEVD) is disordered. The short motif at 593–597 (MEEVD) is the TPR repeat-binding element.

It belongs to the heat shock protein 90 family. In terms of assembly, homodimer.

Its subcellular location is the cytoplasm. In terms of biological role, putative molecular chaperone that may promote the maturation, structural maintenance and proper regulation of specific target proteins. The chain is Putative heat shock protein HSP 90-beta-3 (HSP90AB3P) from Homo sapiens (Human).